The sequence spans 726 residues: uncharacterized protein (726 aa).

Residues methionine 10 to asparagine 135 form the Thioredoxin domain. 2 disordered regions span residues histidine 133–aspartate 153 and valine 227–glycine 280. Acidic residues predominate over residues threonine 138 to aspartate 153. A helical membrane pass occupies residues isoleucine 675–serine 695. Position 708 is a phosphoserine (serine 708).

It is found in the membrane. This is an uncharacterized protein from Schizosaccharomyces pombe (strain 972 / ATCC 24843) (Fission yeast).